Reading from the N-terminus, the 374-residue chain is GDSL esterase/lipase At3g50400 (374 aa).

Positions 1-26 (MKKSIFFVPVLVLFFFGSRFSRVASA) are cleaved as a signal peptide. Residue Ser41 is the Nucleophile of the active site. 2 N-linked (GlcNAc...) asparagine glycosylation sites follow: Asn104 and Asn125. Residues Asp339 and His342 contribute to the active site.

This sequence belongs to the 'GDSL' lipolytic enzyme family.

It localises to the secreted. The polypeptide is GDSL esterase/lipase At3g50400 (Arabidopsis thaliana (Mouse-ear cress)).